A 1407-amino-acid polypeptide reads, in one-letter code: Trichohyalin (1407 aa).

The tract at residues 1–91 (MSPLLKSIID…AQAAYYALGQ (91 aa)) is S-100-like. 2 EF-hand domains span residues 23-48 (CDGAVLKKKDLKILLDREFGAVLQRP) and 49-84 (HDPETVDVMLELLDRDSDGLVGFDEFCLLIFKLAQA). Asp-32, Asp-62, Asp-64, Asp-66, and Glu-73 together coordinate Ca(2+). 7 disordered regions span residues 148–172 (EEEEQRKKRERFEQHYSRQYRDKEQ), 218–237 (LREEEQQRRERREQHERALQ), 362–471 (REQA…EEEQ), 486–587 (EQLQ…ERER), 1014–1033 (REEERLRRQERDRKFREEER), 1062–1082 (KEEKQLRRQERDRKFREEEQQ), and 1313–1407 (EQFA…QYRP). Basic and acidic residues-rich tracts occupy residues 362 to 381 (REQARERGESLTRRWQRQLE), 396 to 424 (RRQEEQSLRQDQERRQRQERERELEEQAR), 447 to 471 (SLRERQLRAEERQEQEQRFREEEEQ), and 554 to 587 (QREKRRQEREREYREEEKLQREEDEKRRRQERER). Residues 1313 to 1376 (EQFAREEKSR…FREDQSRRQV (64 aa)) show a composition bias toward basic and acidic residues.

It belongs to the S100-fused protein family. Homodimer. Substrate of transglutaminase. Some 200 arginines are probably converted to citrullines by peptidylarginine deimidase. As to expression, found in the hard keratinizing tissues such as the inner root sheath (IRS) of hair follicles and medulla, and in the filiform papillae of dorsal tongue epithelium.

Intermediate filament-associated protein that associates in regular arrays with keratin intermediate filaments (KIF) of the inner root sheath cells of the hair follicle and the granular layer of the epidermis. It later becomes cross-linked to KIF by isodipeptide bonds. It may serve as scaffold protein, together with involucrin, in the organization of the cell envelope or even anchor the cell envelope to the KIF network. It may be involved in its own calcium-dependent postsynthetic processing during terminal differentiation. This is Trichohyalin (TCHH) from Oryctolagus cuniculus (Rabbit).